A 279-amino-acid polypeptide reads, in one-letter code: Early nodulin-like protein 18 (279 aa).

A signal peptide spans 1 to 24 (MAGAVATVSVGLAWLGLMAAAASA). The Phytocyanin domain occupies 25–133 (TQFRVGGGRG…GEKLVVVVMA (109 aa)). A disulfide bond links Cys82 and Cys121. N-linked (GlcNAc...) asparagine glycosylation is present at Asn83. Residues 138–256 (RHAPPPSPPA…ANDRSGAAAA (119 aa)) are disordered. Residues 140–168 (APPPSPPAVPPPVAPVPMPSPASSPPSPA) are compositionally biased toward pro residues. Over residues 169–185 (PAAATPSLAPSPVATTP) the composition is skewed to low complexity. Positions 186-199 (SPSPSVSPMAPAPA) are enriched in pro residues. Composition is skewed to low complexity over residues 212–226 (AAMA…GGVA) and 234–256 (TDGA…AAAA). Asn238 carries N-linked (GlcNAc...) asparagine glycosylation. Ser251 carries GPI-anchor amidated serine lipidation. The propeptide at 252-279 (GAAAAAPVVAGVVVTSLGAYIGYAMLAI) is removed in mature form.

The protein belongs to the early nodulin-like (ENODL) family. In terms of tissue distribution, specifically expressed in reproductive tissues. Mainly observed in developing seeds and in mature leaves.

It is found in the cell membrane. May act as a carbohydrate transporter. Promotes tolerance to salt stress in a redox-dependent manner. In Oryza sativa subsp. japonica (Rice), this protein is Early nodulin-like protein 18.